The following is a 574-amino-acid chain: Sulfate adenylyltransferase (574 aa).

An N-terminal region spans residues 1–170 (MANTPHGGVL…LEAINRLEHY (170 aa)). The interval 171 to 395 (DFLDLRFTPS…LREENPLPAE (225 aa)) is catalytic. Glutamine 198 provides a ligand contact to sulfate. Residues 198–201 (QTRN) and 292–295 (GRDH) contribute to the ATP site. Residues threonine 199, arginine 200, and asparagine 201 contribute to the active site. Residue arginine 200 coordinates sulfate. Residue alanine 296 coordinates sulfate. An ATP-binding site is contributed by methionine 334. The allosteric regulation domain; adenylyl-sulfate kinase-like stretch occupies residues 396–574 (KGFTVFMTGY…LESNGLLDRL (179 aa)). 3'-phosphoadenylyl sulfate is bound by residues 435-438 (ENVR), arginine 452, 478-479 (IA), and lysine 516.

In the N-terminal section; belongs to the sulfate adenylyltransferase family. The protein in the C-terminal section; belongs to the APS kinase family. As to quaternary structure, homohexamer. Dimer of trimers.

The protein localises to the cytoplasm. It carries out the reaction sulfate + ATP + H(+) = adenosine 5'-phosphosulfate + diphosphate. Its pathway is sulfur metabolism; hydrogen sulfide biosynthesis; sulfite from sulfate: step 1/3. Allosterically inhibited by 3'-phosphoadenosine 5'-phosphosulfate (PAPS). Its function is as follows. Catalyzes the first intracellular reaction of sulfate assimilation, forming adenosine-5'-phosphosulfate (APS) from inorganic sulfate and ATP. Plays an important role in sulfate activation as a component of the biosynthesis pathway of sulfur-containing amino acids. In Gibberella zeae (strain ATCC MYA-4620 / CBS 123657 / FGSC 9075 / NRRL 31084 / PH-1) (Wheat head blight fungus), this protein is Sulfate adenylyltransferase.